Reading from the N-terminus, the 368-residue chain is Trans-enoyl reductase TwmE (368 aa).

49-52 (SDYK) is a binding site for NADP(+). 135–142 (FKAATLGT) lines the substrate pocket. NADP(+) is bound by residues 204 to 207 (SPRS), tyrosine 222, and 269 to 270 (LE). 290 to 294 (SAELY) is a substrate binding site. Residue 360–361 (HP) coordinates NADP(+).

It belongs to the zinc-containing alcohol dehydrogenase family. Monomer.

Its pathway is secondary metabolite biosynthesis. Functionally, trans-enoyl reductase; part of the gene cluster that mediates the biosynthesis of wortmanamides A and B, reduced long-chain polyketides amidated with a specific omega-amino acid, 5-aminopentanoic acid (5PA). The PKS modules of TwmB are involved in the synthesis of the polyketide backbone, whereas the non-canonical C domain of TwmB is a bonafide condensation domain that specifically selects 5PA and catalyzes amidation to release polyketide chain. The C domain clearly prefers C16 and C18 fatty acyl substrates, which is consistent with simultaneous formation of both octaketide and nonaketide acyl amides wortmanamides A and B. Because TwmB lacks a designated enoylreductase (ER) domain, the required activity is provided the enoyl reductase TwmE. The roles of the remaining enzymes have still to be clarified. This is Trans-enoyl reductase TwmE from Talaromyces wortmannii (Penicillium wortmannii).